The sequence spans 154 residues: Aspartate carbamoyltransferase regulatory chain (154 aa).

Residues C109, C114, C138, and C141 each contribute to the Zn(2+) site.

It belongs to the PyrI family. Contains catalytic and regulatory chains. The cofactor is Zn(2+).

Functionally, involved in allosteric regulation of aspartate carbamoyltransferase. This Yersinia pseudotuberculosis serotype O:1b (strain IP 31758) protein is Aspartate carbamoyltransferase regulatory chain.